The chain runs to 445 residues: NADH-quinone oxidoreductase subunit F (445 aa).

NAD(+) is bound at residue 61-70; the sequence is GRGGAGFATG. 177 to 224 contributes to the FMN binding site; the sequence is GAGAYICGEETALLDSLEGRRGQPRLRPPFPAVAGLYGCPTVINNVET. [4Fe-4S] cluster-binding residues include cysteine 353, cysteine 356, cysteine 359, and cysteine 399.

It belongs to the complex I 51 kDa subunit family. FMN is required as a cofactor. [4Fe-4S] cluster serves as cofactor.

The enzyme catalyses a quinone + NADH + 5 H(+)(in) = a quinol + NAD(+) + 4 H(+)(out). Its function is as follows. NDH-1 shuttles electrons from NADH, via FMN and iron-sulfur (Fe-S) centers, to quinones in the respiratory chain. The immediate electron acceptor for the enzyme in this species is believed to be menaquinone. Couples the redox reaction to proton translocation (for every two electrons transferred, four hydrogen ions are translocated across the cytoplasmic membrane), and thus conserves the redox energy in a proton gradient. The chain is NADH-quinone oxidoreductase subunit F (nuoF) from Mycobacterium bovis (strain ATCC BAA-935 / AF2122/97).